The chain runs to 448 residues: UDP-N-acetylmuramoylalanine--D-glutamate ligase (448 aa).

ATP is bound at residue 112–118 (GSNAKST).

It belongs to the MurCDEF family.

It is found in the cytoplasm. The catalysed reaction is UDP-N-acetyl-alpha-D-muramoyl-L-alanine + D-glutamate + ATP = UDP-N-acetyl-alpha-D-muramoyl-L-alanyl-D-glutamate + ADP + phosphate + H(+). It participates in cell wall biogenesis; peptidoglycan biosynthesis. Cell wall formation. Catalyzes the addition of glutamate to the nucleotide precursor UDP-N-acetylmuramoyl-L-alanine (UMA). This Acinetobacter baylyi (strain ATCC 33305 / BD413 / ADP1) protein is UDP-N-acetylmuramoylalanine--D-glutamate ligase.